The following is a 372-amino-acid chain: N-methyl-L-tryptophan oxidase (372 aa).

4 to 34 (DLIIIGSGSVGAAAGYYATRAGLNVLMTDAH) contacts FAD. C308 bears the S-8alpha-FAD cysteine mark.

Belongs to the MSOX/MTOX family. MTOX subfamily. As to quaternary structure, monomer. FAD serves as cofactor.

The enzyme catalyses N(alpha)-methyl-L-tryptophan + O2 + H2O = L-tryptophan + formaldehyde + H2O2. Its function is as follows. Catalyzes the oxidative demethylation of N-methyl-L-tryptophan. This is N-methyl-L-tryptophan oxidase from Escherichia coli O9:H4 (strain HS).